A 502-amino-acid polypeptide reads, in one-letter code: L-arabinose isomerase (502 aa).

Mn(2+) contacts are provided by glutamate 307, glutamate 334, histidine 351, and histidine 450.

The protein belongs to the arabinose isomerase family. The cofactor is Mn(2+).

The catalysed reaction is beta-L-arabinopyranose = L-ribulose. It functions in the pathway carbohydrate degradation; L-arabinose degradation via L-ribulose; D-xylulose 5-phosphate from L-arabinose (bacterial route): step 1/3. Catalyzes the conversion of L-arabinose to L-ribulose. In Nocardioides sp. (strain ATCC BAA-499 / JS614), this protein is L-arabinose isomerase.